The sequence spans 427 residues: Trigger factor (427 aa).

The region spanning 163–248 (GDTVVIDFVG…VHEVKAKEVP (86 aa)) is the PPIase FKBP-type domain.

It belongs to the FKBP-type PPIase family. Tig subfamily.

The protein resides in the cytoplasm. It catalyses the reaction [protein]-peptidylproline (omega=180) = [protein]-peptidylproline (omega=0). Its function is as follows. Involved in protein export. Acts as a chaperone by maintaining the newly synthesized protein in an open conformation. Functions as a peptidyl-prolyl cis-trans isomerase. This chain is Trigger factor, found in Streptococcus equi subsp. equi (strain 4047).